Here is a 257-residue protein sequence, read N- to C-terminus: Isoprenyl transferase (257 aa).

Residue aspartate 37 is part of the active site. Aspartate 37 provides a ligand contact to Mg(2+). Residues 38–41, tryptophan 42, arginine 50, histidine 54, and 82–84 each bind substrate; these read GNGR and STE. Asparagine 85 serves as the catalytic Proton acceptor. Residues tryptophan 86, arginine 88, arginine 205, and 211–213 contribute to the substrate site; that span reads RLS. Position 224 (glutamate 224) interacts with Mg(2+).

Belongs to the UPP synthase family. In terms of assembly, homodimer. It depends on Mg(2+) as a cofactor.

Functionally, catalyzes the condensation of isopentenyl diphosphate (IPP) with allylic pyrophosphates generating different type of terpenoids. This chain is Isoprenyl transferase, found in Shouchella clausii (strain KSM-K16) (Alkalihalobacillus clausii).